Reading from the N-terminus, the 428-residue chain is Glutamyl-tRNA reductase (428 aa).

Substrate is bound by residues 55–58 (TCNR), Ser114, 119–121 (ETQ), and Gln125. Catalysis depends on Cys56, which acts as the Nucleophile. An NADP(+)-binding site is contributed by 194-199 (GAGEMI).

Belongs to the glutamyl-tRNA reductase family. Homodimer.

The catalysed reaction is (S)-4-amino-5-oxopentanoate + tRNA(Glu) + NADP(+) = L-glutamyl-tRNA(Glu) + NADPH + H(+). Its pathway is porphyrin-containing compound metabolism; protoporphyrin-IX biosynthesis; 5-aminolevulinate from L-glutamyl-tRNA(Glu): step 1/2. In terms of biological role, catalyzes the NADPH-dependent reduction of glutamyl-tRNA(Glu) to glutamate 1-semialdehyde (GSA). The chain is Glutamyl-tRNA reductase from Paraburkholderia phytofirmans (strain DSM 17436 / LMG 22146 / PsJN) (Burkholderia phytofirmans).